A 581-amino-acid chain; its full sequence is Kelch-like protein 38 (581 aa).

In terms of domain architecture, BTB spans 34–101 (TDVSICSGAW…VYTGEVHISA (68 aa)). Residues 136–237 (CLGLVRLAEI…HPAFFHHFIA (102 aa)) enclose the BACK domain. Kelch repeat units lie at residues 285–332 (FLLL…TLHR), 334–383 (VYVL…THRN), 384–431 (FIFS…VKDQ), 433–479 (LYLF…VLGE), 480–521 (QIVI…VMGN), and 523–573 (LYVT…TLQC).

This Mus musculus (Mouse) protein is Kelch-like protein 38 (Klhl38).